The primary structure comprises 266 residues: Glutamate racemase (266 aa).

Substrate contacts are provided by residues 10-11 (DS) and 42-43 (YG). C73 acts as the Proton donor/acceptor in catalysis. A substrate-binding site is contributed by 74–75 (NT). The active-site Proton donor/acceptor is C183. Residue 184-185 (TH) coordinates substrate.

The protein belongs to the aspartate/glutamate racemases family.

It carries out the reaction L-glutamate = D-glutamate. The protein operates within cell wall biogenesis; peptidoglycan biosynthesis. Its function is as follows. Provides the (R)-glutamate required for cell wall biosynthesis. This Lactobacillus johnsonii (strain CNCM I-12250 / La1 / NCC 533) protein is Glutamate racemase.